A 651-amino-acid chain; its full sequence is DNA endonuclease RBBP8 (651 aa).

2 coiled-coil regions span residues 35–84 (LQEL…EDRL) and 117–138 (ISEL…SLEL). Disordered stretches follow at residues 138–199 (LERL…PESR), 363–433 (NGRL…EHQA), and 487–539 (YESC…SDKS). The span at 363-379 (NGRLQSKNQETSEIETT) shows a compositional bias: polar residues. The span at 380–391 (QDSKKKCLDGHT) shows a compositional bias: basic and acidic residues. Over residues 503–515 (VYEEEREEDDPEE) the composition is skewed to acidic residues. Basic and acidic residues predominate over residues 525–539 (RPADRKPLVSDSDKS). Residues Thr599 and Thr611 each carry the phosphothreonine modification.

This sequence belongs to the COM1/SAE2/CtIP family. As to quaternary structure, homotetramer; formed by antiparallel association of helical extensions protruding from the N-termini of two parallel coiled-coil dimers. Interacts with the MRN complex; the interaction links DNA sensing to resection. Interacts with samhd1. In terms of processing, phosphorylation at Thr-599 and Thr-611 promote interaction with nbn and recruitment to double-strand breaks (DSBs).

The protein resides in the nucleus. It is found in the chromosome. Endonuclease that cooperates with the MRE11-RAD50-NBN (MRN) complex in DNA-end resection, the first step of double-strand break (DSB) repair through the homologous recombination (HR) pathway. Functions downstream of the MRN complex and ATM, promotes ATR activation and its recruitment to DSBs in the S/G2 phase facilitating the generation of ssDNA. Specifically promotes the endonuclease activity of the MRN complex to clear DNA ends containing protein adducts: recruited to DSBs by nbn following phosphorylation, and promotes the endonuclease of mre11 to clear protein-DNA adducts and generate clean double-strand break ends. This is DNA endonuclease RBBP8 (rbbp8) from Danio rerio (Zebrafish).